A 535-amino-acid polypeptide reads, in one-letter code: Ribonuclease Y (535 aa).

The chain crosses the membrane as a helical span at residues 4–24 (IILAMVCALIGLIIGYVAISM). The interval 107-145 (TDRASSLDRKDENLSNKEKMLDSKEQSLTDKSRHINERE) is disordered. The KH domain maps to 225–285 (TITTVHLPDD…IRREIARMTL (61 aa)). An HD domain is found at 351 to 444 (VLRHSVEVGK…VAAADALSSA (94 aa)).

Belongs to the RNase Y family.

It localises to the cell membrane. Endoribonuclease that initiates mRNA decay. The chain is Ribonuclease Y from Streptococcus agalactiae serotype Ia (strain ATCC 27591 / A909 / CDC SS700).